The following is a 937-amino-acid chain: Translation initiation factor IF-2 (937 aa).

Disordered stretches follow at residues 61–156 and 171–274; these read IQAN…KAKQ and LTQS…SHKI. The span at 179-196 shows a compositional bias: basic and acidic residues; it reads AKKEISEVKKQEQEIKRH. Basic residues predominate over residues 197–208; it reads ENIKRRTGFRVI. The span at 237–252 shows a compositional bias: basic and acidic residues; that stretch reads EDIKKEWQEKDKQEAK. A tr-type G domain is found at 436-605; that stretch reads ERPPVVTIMG…LIQADIMELK (170 aa). A G1 region spans residues 445 to 452; the sequence is GHVDHGKT. 445-452 is a binding site for GTP; the sequence is GHVDHGKT. The segment at 470 to 474 is G2; it reads GITQH. The tract at residues 491 to 494 is G3; the sequence is DTPG. GTP-binding positions include 491–495 and 545–548; these read DTPGH and NKMD. The segment at 545–548 is G4; it reads NKMD. The G5 stretch occupies residues 581–583; the sequence is SAK.

This sequence belongs to the TRAFAC class translation factor GTPase superfamily. Classic translation factor GTPase family. IF-2 subfamily.

Its subcellular location is the cytoplasm. One of the essential components for the initiation of protein synthesis. Protects formylmethionyl-tRNA from spontaneous hydrolysis and promotes its binding to the 30S ribosomal subunits. Also involved in the hydrolysis of GTP during the formation of the 70S ribosomal complex. The protein is Translation initiation factor IF-2 of Helicobacter pylori (strain G27).